The following is a 101-amino-acid chain: Small ribosomal subunit protein uS14A (101 aa).

Residues Ile31 to Arg59 form a disordered region.

It belongs to the universal ribosomal protein uS14 family. In terms of assembly, part of the 30S ribosomal subunit. Contacts proteins S3 and S10.

Functionally, binds 16S rRNA, required for the assembly of 30S particles and may also be responsible for determining the conformation of the 16S rRNA at the A site. The protein is Small ribosomal subunit protein uS14A of Mycobacteroides abscessus (strain ATCC 19977 / DSM 44196 / CCUG 20993 / CIP 104536 / JCM 13569 / NCTC 13031 / TMC 1543 / L948) (Mycobacterium abscessus).